The chain runs to 934 residues: Complement component C6 (934 aa).

An N-terminal signal peptide occupies residues 1–21; the sequence is MTRHLTLCFILLVMLIDKSEA. Intrachain disulfides connect cysteine 22-cysteine 61, cysteine 24-cysteine 65, cysteine 35-cysteine 73, cysteine 39-cysteine 78, cysteine 82-cysteine 117, cysteine 93-cysteine 127, cysteine 96-cysteine 133, cysteine 140-cysteine 151, cysteine 146-cysteine 164, cysteine 158-cysteine 173, and cysteine 180-cysteine 218. 2 TSP type-1 domains span residues 22-79 and 81-134; these read CFCD…QTCP and NCVL…KLCK. The region spanning 138-175 is the LDL-receptor class A domain; sequence TNCKNKFLCDSGRCIPSKLECNGENDCGDNSDERNCGR. The Ca(2+) site is built by leucine 156, asparagine 159, glutamate 161, aspartate 163, aspartate 169, and glutamate 170. Residues 176-522 form the MACPF domain; the sequence is TKPVCTRIYT…EYAAKFDPCQ (347 aa). A beta stranded membrane pass occupies residues 278 to 290; that stretch reads FFPIPIFHFSEKN. A glycan (N-linked (GlcNAc...) asparagine) is linked at asparagine 324. 16 disulfides stabilise this stretch: cysteine 399–cysteine 420, cysteine 499–cysteine 623, cysteine 521–cysteine 570, cysteine 523–cysteine 539, cysteine 526–cysteine 541, cysteine 543–cysteine 552, cysteine 577–cysteine 611, cysteine 589–cysteine 601, cysteine 644–cysteine 686, cysteine 672–cysteine 699, cysteine 704–cysteine 746, cysteine 732–cysteine 761, cysteine 773–cysteine 823, cysteine 784–cysteine 801, cysteine 786–cysteine 837, and cysteine 793–cysteine 816. The chain crosses the membrane as a beta stranded span at residues 402-415; that stretch reads YETKKLKFLYMEIH. An EGF-like domain is found at 523 to 553; the sequence is CAPCPNNGRPRLSGTECLCVCQSGTYGENCE. The TSP type-1 3 domain occupies 565-612; it reads DGNWGCWSSWSACNAAYRRSRTRECNNPAPQRGGQSCGGKDQQEEDCT. CCP regions lie at residues 611-688 and 689-765; these read CTVS…RCLP and DRTW…EQAI. 2 consecutive Sushi domains span residues 642–701 and 702–763; these read SGCS…ECQR and TSCL…TCEQ. The C5b-binding domain stretch occupies residues 642–934; it reads SGCSQPPLPE…EILNPGRCPD (293 aa). The tract at residues 766–840 is factor I module (FIM) 1; it reads LTKSKDLCPP…FVHSGSCQEG (75 aa). Residues 785 to 839 enclose the Kazal-like 1 domain; sequence ICMSPEEDCSAYSEDLCIFDGGSSQYFTSSACKFLAGKCLNNTQSHFVHSGSCQE. N-linked (GlcNAc...) asparagine glycans are attached at residues asparagine 825, asparagine 855, and asparagine 872. The tract at residues 858–934 is factor I module (FIM) 2; that stretch reads KRVSCGYNTC…EILNPGRCPD (77 aa). Intrachain disulfides connect cysteine 862–cysteine 873, cysteine 867–cysteine 919, cysteine 880–cysteine 897, cysteine 882–cysteine 932, and cysteine 888–cysteine 912. Positions 876 to 934 constitute a Kazal-like 2 domain; that stretch reads HTSNCVCLLPPQCSKDENQLYCVKIGSSMREKTVNICTLGAVRCANIKVEILNPGRCPD.

The protein belongs to the complement C6/C7/C8/C9 family. In terms of assembly, component of the membrane attack complex (MAC), composed of complement C5b, C6, C7, C8A, C8B, C8G and multiple copies of the pore-forming subunit C9. In terms of processing, all cysteine residues are assumed to be cross-linked to one another. Individual modules containing an even number of conserved cysteine residues are supposed to have disulfide linkages only within the same module.

It localises to the secreted. Its subcellular location is the target cell membrane. Its activity is regulated as follows. Membrane attack complex (MAC) assembly is inhibited by CD59, thereby protecting self-cells from damage during complement activation. MAC assembly is also inhibited by clusterin (CLU) chaperones that inhibit polymerization of C9. Its function is as follows. Component of the membrane attack complex (MAC), a multiprotein complex activated by the complement cascade, which inserts into a target cell membrane and forms a pore, leading to target cell membrane rupture and cell lysis. The MAC is initiated by proteolytic cleavage of C5 into complement C5b in response to the classical, alternative, lectin and GZMK complement pathways. The complement pathways consist in a cascade of proteins that leads to phagocytosis and breakdown of pathogens and signaling that strengthens the adaptive immune system. Together with component C5b, involved in MAC complex assembly: complement C5b and C6 associate with the outer leaflet of target cell membrane, reducing the energy for membrane bending. The chain is Complement component C6 from Mus musculus (Mouse).